Reading from the N-terminus, the 207-residue chain is Dephospho-CoA kinase (207 aa).

Residues 8-207 enclose the DPCK domain; it reads AIALTGSIGS…LPCVDCVQSS (200 aa). ATP is bound at residue 16-21; it reads GSGKST.

It belongs to the CoaE family.

Its subcellular location is the cytoplasm. The enzyme catalyses 3'-dephospho-CoA + ATP = ADP + CoA + H(+). It participates in cofactor biosynthesis; coenzyme A biosynthesis; CoA from (R)-pantothenate: step 5/5. In terms of biological role, catalyzes the phosphorylation of the 3'-hydroxyl group of dephosphocoenzyme A to form coenzyme A. In Helicobacter hepaticus (strain ATCC 51449 / 3B1), this protein is Dephospho-CoA kinase.